Reading from the N-terminus, the 131-residue chain is C-type natriuretic peptide 2 (131 aa).

A signal peptide spans 1–22 (MLYPALLCAALLLIAPLGHTEG). Positions 23-109 (RTLYPSPDAI…KRAVTDRSRR (87 aa)) are excised as a propeptide. C115 and C131 are joined by a disulfide.

Belongs to the natriuretic peptide family. Expressed in brain and to a low extent in atrium.

The protein resides in the secreted. Functionally, exhibits natriuretic and vasodepressor activity. Has a cGMP-stimulating activity. The sequence is that of C-type natriuretic peptide 2 from Oncorhynchus mykiss (Rainbow trout).